The following is a 240-amino-acid chain: Uridylate kinase (240 aa).

K9–G12 is an ATP binding site. G51 provides a ligand contact to UMP. ATP-binding residues include G52 and R56. UMP-binding positions include D71 and T132–T139. T159, Y165, and D168 together coordinate ATP.

This sequence belongs to the UMP kinase family. Homohexamer.

Its subcellular location is the cytoplasm. It catalyses the reaction UMP + ATP = UDP + ADP. It participates in pyrimidine metabolism; CTP biosynthesis via de novo pathway; UDP from UMP (UMPK route): step 1/1. Its activity is regulated as follows. Inhibited by UTP. In terms of biological role, catalyzes the reversible phosphorylation of UMP to UDP. The polypeptide is Uridylate kinase (Synechococcus elongatus (strain ATCC 33912 / PCC 7942 / FACHB-805) (Anacystis nidulans R2)).